The sequence spans 360 residues: MKPSMRSRLEQLAHRLIEVDALLAEPETAADMDRFRKLSRERAELEPVVEAFNAFLGVEADVATAQEMLSDPDMKAMAEDEIKTGRARIEEMEAALQLLLLPRDPDDGRSLFLEIRAGTGGDESALFSGDLLRMYTRYAETRGWRVEIMSESESELGGYKEVIARIDGDGAYGRLKFESGAHRVQRVPATEAQGRIHTSACTVAVMPEADAMSDIVINPSDLRIDTFRASGAGGQHINKTDSAVRITHVPTGLVVECQDDRSQHRNKDKAMQVLAARLKDKEMRERQSKEAAERKSLIGSGDRSERIRTYNYPQGRVTDHRINLTLYKLQQIMEGDLDELTGALLAEHQAEQLAALGHDL.

Glutamine 235 is modified (N5-methylglutamine).

It belongs to the prokaryotic/mitochondrial release factor family. Methylated by PrmC. Methylation increases the termination efficiency of RF1.

It localises to the cytoplasm. Functionally, peptide chain release factor 1 directs the termination of translation in response to the peptide chain termination codons UAG and UAA. In Bordetella pertussis (strain Tohama I / ATCC BAA-589 / NCTC 13251), this protein is Peptide chain release factor 1.